Here is a 739-residue protein sequence, read N- to C-terminus: Exocyst complex component 3-like protein (739 aa).

2 disordered regions span residues 1–21 (MDSK…PEWP) and 698–718 (AALS…RRAL). A mediates interaction with EXOC2, EXOC4 and EXOC5 region spans residues 1 to 370 (MDSKIQPTLR…DVSQLEPLLT (370 aa)).

The protein belongs to the SEC6 family. Interacts with EXOC2, EXOC4 and EXOC5; may be part of the exocyst. In terms of tissue distribution, ubiquitously expressed.

It localises to the cytoplasmic vesicle. The protein resides in the secretory vesicle. Functionally, as part of the exocyst, may play a role in regulated exocytosis of insulin granules. The protein is Exocyst complex component 3-like protein (Exoc3l1) of Mus musculus (Mouse).